We begin with the raw amino-acid sequence, 352 residues long: tRNA-specific 2-thiouridylase MnmA (352 aa).

Residues Gly7 to Ser14 and Leu33 each bind ATP. Cys94 functions as the Nucleophile in the catalytic mechanism. A disulfide bridge links Cys94 with Cys193. Gly119 serves as a coordination point for ATP. Positions Lys143–Gln145 are interaction with tRNA. The active-site Cysteine persulfide intermediate is Cys193. The interval Arg298 to Tyr299 is interaction with tRNA.

Belongs to the MnmA/TRMU family.

The protein localises to the cytoplasm. The catalysed reaction is S-sulfanyl-L-cysteinyl-[protein] + uridine(34) in tRNA + AH2 + ATP = 2-thiouridine(34) in tRNA + L-cysteinyl-[protein] + A + AMP + diphosphate + H(+). Functionally, catalyzes the 2-thiolation of uridine at the wobble position (U34) of tRNA, leading to the formation of s(2)U34. The sequence is that of tRNA-specific 2-thiouridylase MnmA from Trichormus variabilis (strain ATCC 29413 / PCC 7937) (Anabaena variabilis).